Consider the following 809-residue polypeptide: Chorion peroxidase (809 aa).

The N-terminal stretch at 1 to 21 (MSRILFILLLLIVTQLSELQA) is a signal peptide. Residues 22–223 (AAFSVRQNRF…KFTETPLAHH (202 aa)) constitute a propeptide that is removed on maturation. Residues 36–55 (DLQTPAPLATSTESSKKPEK) are disordered. An N-linked (GlcNAc...) asparagine glycan is attached at Asn-110. Cys-224 is subject to N-acetylcysteine; in Chorion peroxidase light chain. Residues Cys-230 and Cys-244 are joined by a disulfide bond. His-320 serves as the catalytic Proton acceptor. Cys-448 and Cys-457 form a disulfide bridge. His-568 provides a ligand contact to heme b. The cysteines at positions 765 and 794 are disulfide-linked.

It belongs to the peroxidase family. XPO subfamily. As to quaternary structure, heterodimer. Heme b serves as cofactor. Expressed at low levels in the germarium and early follicles. Expression becomes progressively stronger during vitellogenesis, and is highly expressed in germ cells and somatic cells. A subset of follicle cells, termed border cells (BC), exhibit a high level of expression.

It is found in the secreted. The catalysed reaction is 2 a phenolic donor + H2O2 = 2 a phenolic radical donor + 2 H2O. Its function is as follows. Required for ovarian follicle maturation. Involved in the formation of a rigid and insoluble egg chorion by catalyzing chorion protein cross-linking through dityrosine formation and phenol oxidase-catalyzed chorion melanization. This is Chorion peroxidase (Pxt) from Drosophila melanogaster (Fruit fly).